Reading from the N-terminus, the 73-residue chain is Tetrahydromethanopterin S-methyltransferase subunit G (73 aa).

The helical transmembrane segment at 48–68 (IGILYGAVVGLLLFLIYVSVS) threads the bilayer.

The protein belongs to the MtrG family. The complex is composed of 8 subunits; MtrA, MtrB, MtrC, MtrD, MtrE, MtrF, MtrG and MtrH.

It localises to the cell membrane. The enzyme catalyses 5-methyl-5,6,7,8-tetrahydromethanopterin + coenzyme M + 2 Na(+)(in) = 5,6,7,8-tetrahydromethanopterin + methyl-coenzyme M + 2 Na(+)(out). It functions in the pathway one-carbon metabolism; methanogenesis from CO(2); methyl-coenzyme M from 5,10-methylene-5,6,7,8-tetrahydromethanopterin: step 2/2. Functionally, part of a complex that catalyzes the formation of methyl-coenzyme M and tetrahydromethanopterin from coenzyme M and methyl-tetrahydromethanopterin. This is an energy-conserving, sodium-ion translocating step. The polypeptide is Tetrahydromethanopterin S-methyltransferase subunit G (Methanosarcina acetivorans (strain ATCC 35395 / DSM 2834 / JCM 12185 / C2A)).